A 184-amino-acid polypeptide reads, in one-letter code: NADH-quinone oxidoreductase subunit B (184 aa).

[4Fe-4S] cluster is bound by residues Cys37, Cys38, Cys103, and Cys132.

Belongs to the complex I 20 kDa subunit family. As to quaternary structure, NDH-1 is composed of 14 different subunits. Subunits NuoB, C, D, E, F, and G constitute the peripheral sector of the complex. Requires [4Fe-4S] cluster as cofactor.

Its subcellular location is the cell membrane. The catalysed reaction is a quinone + NADH + 5 H(+)(in) = a quinol + NAD(+) + 4 H(+)(out). In terms of biological role, NDH-1 shuttles electrons from NADH, via FMN and iron-sulfur (Fe-S) centers, to quinones in the respiratory chain. The immediate electron acceptor for the enzyme in this species is believed to be a menaquinone. Couples the redox reaction to proton translocation (for every two electrons transferred, four hydrogen ions are translocated across the cytoplasmic membrane), and thus conserves the redox energy in a proton gradient. The chain is NADH-quinone oxidoreductase subunit B from Nocardioides sp. (strain ATCC BAA-499 / JS614).